A 395-amino-acid polypeptide reads, in one-letter code: Protein PELOTA 2 (395 aa).

It belongs to the eukaryotic release factor 1 family. Pelota subfamily. It depends on a divalent metal cation as a cofactor.

The protein localises to the cytoplasm. The protein resides in the nucleus. Functionally, component of the Pelota-HBS1L complex, a complex that recognizes stalled ribosomes and triggers the No-Go Decay (NGD) pathway. In the Pelota-HBS1L complex, pelo recognizes ribosomes stalled at the 3' end of an mRNA and engages stalled ribosomes by destabilizing mRNA in the mRNA channel. Following ribosome-binding, the Pelota-HBS1L complex promotes the disassembly of stalled ribosomes, followed by degradation of damaged mRNAs as part of the NGD pathway. This is Protein PELOTA 2 (PEL2) from Arabidopsis thaliana (Mouse-ear cress).